Consider the following 111-residue polypeptide: Putative G antigen family E member 3 (111 aa).

A disordered region spans residues 1–67 (MSEHVRTRSQ…EGAPAVQGPD (67 aa)). Residues 8–24 (RSQSSERGNDQESSQPV) are compositionally biased toward polar residues. Threonine 97 is subject to Phosphothreonine.

This sequence belongs to the GAGE family.

The polypeptide is Putative G antigen family E member 3 (PAGE2B) (Homo sapiens (Human)).